The primary structure comprises 264 residues: MKTYLQLLEHILQQGVEKSDRTGTGTLSVFGYQMRFDLTKGFPLVTTKKLHTRSIVHELLWFLRGDTNISYLKENGVTIWDEWADNNGDLGPVYGKQWRSWPTADGHTIDQLSDVVQQIKSNPDSRRLIVSAWNVGELDKMALMPCHALFQFYVANNKLSCQLYQRSADVFLGVPFNIASYSLLTHMVAQQCNLDVAEFIWTGGDCHLYLNHLEQAQIQLTREPLPLPSLTIKRKPASLFDYAYEDFEFLNYQSHPAIKAPIAV.

Arg21 provides a ligand contact to dUMP. Residue His51 participates in (6R)-5,10-methylene-5,6,7,8-tetrahydrofolate binding. 126-127 (RR) is a binding site for dUMP. Catalysis depends on Cys146, which acts as the Nucleophile. DUMP is bound by residues 166-169 (RSAD), Asn177, and 207-209 (HLY). Position 169 (Asp169) interacts with (6R)-5,10-methylene-5,6,7,8-tetrahydrofolate. Ala263 contributes to the (6R)-5,10-methylene-5,6,7,8-tetrahydrofolate binding site.

The protein belongs to the thymidylate synthase family. Bacterial-type ThyA subfamily. In terms of assembly, homodimer.

The protein resides in the cytoplasm. It catalyses the reaction dUMP + (6R)-5,10-methylene-5,6,7,8-tetrahydrofolate = 7,8-dihydrofolate + dTMP. Its pathway is pyrimidine metabolism; dTTP biosynthesis. In terms of biological role, catalyzes the reductive methylation of 2'-deoxyuridine-5'-monophosphate (dUMP) to 2'-deoxythymidine-5'-monophosphate (dTMP) while utilizing 5,10-methylenetetrahydrofolate (mTHF) as the methyl donor and reductant in the reaction, yielding dihydrofolate (DHF) as a by-product. This enzymatic reaction provides an intracellular de novo source of dTMP, an essential precursor for DNA biosynthesis. This chain is Thymidylate synthase, found in Legionella pneumophila (strain Paris).